The following is a 132-amino-acid chain: Large ribosomal subunit protein bL12 (132 aa).

The protein belongs to the bacterial ribosomal protein bL12 family. As to quaternary structure, homodimer. Part of the ribosomal stalk of the 50S ribosomal subunit. Forms a multimeric L10(L12)X complex, where L10 forms an elongated spine to which 2 to 4 L12 dimers bind in a sequential fashion. Binds GTP-bound translation factors.

Its function is as follows. Forms part of the ribosomal stalk which helps the ribosome interact with GTP-bound translation factors. Is thus essential for accurate translation. The protein is Large ribosomal subunit protein bL12 of Chloroflexus aggregans (strain MD-66 / DSM 9485).